Reading from the N-terminus, the 283-residue chain is Glutamate racemase (283 aa).

Substrate contacts are provided by residues 13–14 (DS) and 45–46 (YG). Cysteine 76 (proton donor/acceptor) is an active-site residue. Residue 77–78 (NT) coordinates substrate. Cysteine 186 acts as the Proton donor/acceptor in catalysis. 187–188 (TH) lines the substrate pocket.

It belongs to the aspartate/glutamate racemases family.

The catalysed reaction is L-glutamate = D-glutamate. It participates in cell wall biogenesis; peptidoglycan biosynthesis. In terms of biological role, provides the (R)-glutamate required for cell wall biosynthesis. This chain is Glutamate racemase, found in Microcystis aeruginosa (strain NIES-843 / IAM M-2473).